A 107-amino-acid chain; its full sequence is Homeobox protein HD-7 (107 aa).

Residues 21 to 80 (KPGEKVRKSEFQKEVLKKVYQATPYPTWENKIDIGILISLSPRAVDIWFQNKRHINKGKN) constitute a DNA-binding region (homeobox).

Its subcellular location is the nucleus. The chain is Homeobox protein HD-7 (HD-7) from Encephalitozoon cuniculi (strain GB-M1) (Microsporidian parasite).